Consider the following 163-residue polypeptide: Methyl-CpG-binding domain-containing protein 3 (163 aa).

The CW-type zinc finger occupies 6 to 56 (TTLIDSYAAQCWKCLKVRSIESQEDYEEIRSKTLEKFFECKRCEEPGDMVM). The MBD domain occupies 65-137 (WFQDEHSIPK…EEVSFAAPKR (73 aa)). Residues 140-163 (LKKKPVDSHSSSRNTEEDGVSRDA) are disordered. Residues 153-163 (NTEEDGVSRDA) are compositionally biased toward basic and acidic residues.

Its subcellular location is the nucleus. Its function is as follows. Probable transcriptional regulator. The chain is Methyl-CpG-binding domain-containing protein 3 (MBD3) from Arabidopsis thaliana (Mouse-ear cress).